The primary structure comprises 107 residues: Thioredoxin (107 aa).

Residues 2–107 (PSPIQVTDFS…TLTNALKKYL (106 aa)) form the Thioredoxin domain. Catalysis depends on nucleophile residues cysteine 32 and cysteine 35. Cysteine 32 and cysteine 35 are oxidised to a cystine.

The protein belongs to the thioredoxin family.

The protein resides in the plastid. The protein localises to the chloroplast. Participates in various redox reactions through the reversible oxidation of its active center dithiol to a disulfide and catalyzes dithiol-disulfide exchange reactions. This chain is Thioredoxin (trxA), found in Cyanidium caldarium (Red alga).